Reading from the N-terminus, the 425-residue chain is Serine--tRNA ligase (425 aa).

232–234 is an L-serine binding site; sequence TSE. ATP-binding positions include 263-265 and Val279; that span reads RRE. Glu286 is an L-serine binding site. Position 350–353 (350–353) interacts with ATP; that stretch reads EVVS. Position 387 (Thr387) interacts with L-serine.

It belongs to the class-II aminoacyl-tRNA synthetase family. Type-1 seryl-tRNA synthetase subfamily. Homodimer. The tRNA molecule binds across the dimer.

Its subcellular location is the cytoplasm. The catalysed reaction is tRNA(Ser) + L-serine + ATP = L-seryl-tRNA(Ser) + AMP + diphosphate + H(+). It carries out the reaction tRNA(Sec) + L-serine + ATP = L-seryl-tRNA(Sec) + AMP + diphosphate + H(+). It participates in aminoacyl-tRNA biosynthesis; selenocysteinyl-tRNA(Sec) biosynthesis; L-seryl-tRNA(Sec) from L-serine and tRNA(Sec): step 1/1. In terms of biological role, catalyzes the attachment of serine to tRNA(Ser). Is also able to aminoacylate tRNA(Sec) with serine, to form the misacylated tRNA L-seryl-tRNA(Sec), which will be further converted into selenocysteinyl-tRNA(Sec). The chain is Serine--tRNA ligase from Methanospirillum hungatei JF-1 (strain ATCC 27890 / DSM 864 / NBRC 100397 / JF-1).